Consider the following 258-residue polypeptide: Ferredoxin--NADP reductase (258 aa).

In terms of domain architecture, FAD-binding FR-type spans 2–102 (SNLYTERVLS…RKPTGTLVHD (101 aa)). FAD contacts are provided by R51, A52, Y53, S54, F67, I69, L76, T77, and T117. Positions 144, 145, 181, 182, 190, 223, 227, 255, and 257 each coordinate NADP(+). F255, E257, and K258 together coordinate FAD.

Belongs to the ferredoxin--NADP reductase type 1 family. Monomer. FAD is required as a cofactor.

The enzyme catalyses 2 reduced [2Fe-2S]-[ferredoxin] + NADP(+) + H(+) = 2 oxidized [2Fe-2S]-[ferredoxin] + NADPH. In terms of biological role, transports electrons between ferredoxin and NADPH. Provides electrons to heme oxygenase (pigA) allowing anaerobic heme degradation. Provides electrons necessary to reduce and mobilize Fe(3+) in a heterooligomeric bacterioferritin (BFR) complex to Fe(2+). Reduction of Fe(3+) in a pure FtnA BFR does not require Bfd. Reduction of Fe(3+) in a pure BfrB BFR does require Bfd. In Pseudomonas aeruginosa (strain ATCC 15692 / DSM 22644 / CIP 104116 / JCM 14847 / LMG 12228 / 1C / PRS 101 / PAO1), this protein is Ferredoxin--NADP reductase.